Reading from the N-terminus, the 37-residue chain is Diuretic hormone 1 (37 aa).

The protein belongs to the sauvagine/corticotropin-releasing factor/urotensin I family.

The protein localises to the secreted. Functionally, stimulates fluid secretion by the Malpighian tubules. Increases cyclic AMP production. The protein is Diuretic hormone 1 of Tenebrio molitor (Yellow mealworm beetle).